Here is a 219-residue protein sequence, read N- to C-terminus: dTTP/UTP pyrophosphatase (219 aa).

The active-site Proton acceptor is the D79.

Belongs to the Maf family. YhdE subfamily. Requires a divalent metal cation as cofactor.

It is found in the cytoplasm. It carries out the reaction dTTP + H2O = dTMP + diphosphate + H(+). The catalysed reaction is UTP + H2O = UMP + diphosphate + H(+). Nucleoside triphosphate pyrophosphatase that hydrolyzes dTTP and UTP. May have a dual role in cell division arrest and in preventing the incorporation of modified nucleotides into cellular nucleic acids. This chain is dTTP/UTP pyrophosphatase, found in Oleidesulfovibrio alaskensis (strain ATCC BAA-1058 / DSM 17464 / G20) (Desulfovibrio alaskensis).